A 262-amino-acid polypeptide reads, in one-letter code: MREAVIAKVSTQLSEVVGVIERHLEPTLLAVHLYGSAVDGGLKPHSDIDLLVTVTVRLDETTRRALINDLLETSASPGESEILRAVEVTIVVHDDIIPWRYPAKRELQFGEWQRNDILAGIFEPATIDIDLAILLTKAREHSVALVGPAAEELFDPVPEQDLFEALNETLTLWNSPPDWAGDERNVVLTLSRIWYSAVTGKIAPKDVAADWAMERLPAQYQPVILEARQAYLGQEDRLASRADQLEEFVHYVKGEITKVVGK.

The enzyme catalyses streptomycin + ATP = 3''-O-adenylylstreptomycin + diphosphate. The catalysed reaction is spectinomycin + ATP = 9-O-adenylylspectinomycin + diphosphate. In terms of biological role, mediates bacterial resistance to the antibiotics streptomycin and spectinomycin. The polypeptide is Aminoglycoside (3'') (9) adenylyltransferase (Klebsiella pneumoniae).